Here is a 455-residue protein sequence, read N- to C-terminus: Chromosomal replication initiator protein DnaA (455 aa).

The interval 1-77 is domain I, interacts with DnaA modulators; sequence MASLNENQKF…GFEVFGRMID (77 aa). The domain II stretch occupies residues 77–116; that stretch reads DYELYANDELTELELHRLNNQSSIEEQPRSTAKPASPLVS. Residues 117 to 333 are domain III, AAA+ region; the sequence is GLNEKYNFEN…GALNRVEFVA (217 aa). 4 residues coordinate ATP: G161, G163, K164, and T165. Residues 334-455 are domain IV, binds dsDNA; it reads RANGIAVVDI…KDIDSIKRKF (122 aa).

The protein belongs to the DnaA family. As to quaternary structure, oligomerizes as a right-handed, spiral filament on DNA at oriC.

It localises to the cytoplasm. In terms of biological role, plays an essential role in the initiation and regulation of chromosomal replication. ATP-DnaA binds to the origin of replication (oriC) to initiate formation of the DNA replication initiation complex once per cell cycle. Binds the DnaA box (a 9 base pair repeat at the origin) and separates the double-stranded (ds)DNA. Forms a right-handed helical filament on oriC DNA; dsDNA binds to the exterior of the filament while single-stranded (ss)DNA is stabiized in the filament's interior. The ATP-DnaA-oriC complex binds and stabilizes one strand of the AT-rich DNA unwinding element (DUE), permitting loading of DNA polymerase. After initiation quickly degrades to an ADP-DnaA complex that is not apt for DNA replication. Binds acidic phospholipids. This chain is Chromosomal replication initiator protein DnaA, found in Lactococcus lactis subsp. lactis (strain IL1403) (Streptococcus lactis).